The sequence spans 139 residues: Large ribosomal subunit protein bL20 (139 aa).

It belongs to the bacterial ribosomal protein bL20 family.

In terms of biological role, binds directly to 23S ribosomal RNA and is necessary for the in vitro assembly process of the 50S ribosomal subunit. It is not involved in the protein synthesizing functions of that subunit. This Leuconostoc citreum (strain KM20) protein is Large ribosomal subunit protein bL20.